The sequence spans 232 residues: 26.5 kDa heat shock protein, mitochondrial (232 aa).

The N-terminal 42 residues, 1-42, are a transit peptide targeting the mitochondrion; it reads MALARLALRNLQQKLSPSLMGQSCERGLVGNRHNPMKLNRFM. The segment at 44–82 is disordered; it reads TSAGEQEDKMNTEVSVSEKKSPRQNFPRRRGRKSLWRNT. Residues 49–64 are compositionally biased toward basic and acidic residues; the sequence is QEDKMNTEVSVSEKKS. Over residues 69–78 the composition is skewed to basic residues; the sequence is FPRRRGRKSL. A sHSP domain is found at 114-232; sequence IFDNFNVNPF…KKNVQEISVE (119 aa).

This sequence belongs to the small heat shock protein (HSP20) family. In terms of assembly, may form oligomeric structures.

The protein resides in the mitochondrion. The sequence is that of 26.5 kDa heat shock protein, mitochondrial (HSP26.5) from Arabidopsis thaliana (Mouse-ear cress).